The primary structure comprises 92 residues: MTKLTQWLWGLALLGSAWAALTMGALGLELPFPCREVLWPLPAYLLVSAGCYALGTVGYRVATFHDCEDAARELQSQIVEARADLARRGLRF.

2 consecutive transmembrane segments (helical) span residues 8–28 (LWGLALLGSAWAALTMGALGL) and 37–57 (VLWPLPAYLLVSAGCYALGTV).

The protein belongs to the DPM3 family. As to quaternary structure, component of the dolichol-phosphate mannose (DPM) synthase complex composed of DPM1, DPM2 and DPM3; within the complex, associates with DPM1 via its C-terminal domain and with DPM2 via its N-terminal portion. This interaction stabilizes DPM1 protein.

It localises to the endoplasmic reticulum membrane. Its pathway is protein modification; protein glycosylation. Stabilizer subunit of the dolichol-phosphate mannose (DPM) synthase complex; tethers catalytic subunit DPM1 to the endoplasmic reticulum. In Mus musculus (Mouse), this protein is Dolichol-phosphate mannosyltransferase subunit 3 (Dpm3).